Here is an 876-residue protein sequence, read N- to C-terminus: Leucine--tRNA ligase (876 aa).

The 'HIGH' region signature appears at 43-53 (PYPSGRIHMGH). The 'KMSKS' region signature appears at 632-636 (KMSKS). Position 635 (Lys-635) interacts with ATP.

It belongs to the class-I aminoacyl-tRNA synthetase family.

The protein resides in the cytoplasm. The catalysed reaction is tRNA(Leu) + L-leucine + ATP = L-leucyl-tRNA(Leu) + AMP + diphosphate. The chain is Leucine--tRNA ligase from Rhizobium etli (strain CIAT 652).